The primary structure comprises 316 residues: Ribosomal RNA small subunit methyltransferase H (316 aa).

S-adenosyl-L-methionine is bound by residues 35–37, Asp-55, Phe-84, Asp-105, and Gln-112; that span reads SGH.

This sequence belongs to the methyltransferase superfamily. RsmH family.

The protein resides in the cytoplasm. The catalysed reaction is cytidine(1402) in 16S rRNA + S-adenosyl-L-methionine = N(4)-methylcytidine(1402) in 16S rRNA + S-adenosyl-L-homocysteine + H(+). Functionally, specifically methylates the N4 position of cytidine in position 1402 (C1402) of 16S rRNA. The sequence is that of Ribosomal RNA small subunit methyltransferase H from Streptococcus equi subsp. zooepidemicus (strain MGCS10565).